Here is a 361-residue protein sequence, read N- to C-terminus: UDP-N-acetylglucosamine--N-acetylmuramyl-(pentapeptide) pyrophosphoryl-undecaprenol N-acetylglucosamine transferase (361 aa).

Residues Thr-12–Gly-14, Asn-123, Arg-166, Ser-192, and Gln-293 each bind UDP-N-acetyl-alpha-D-glucosamine.

This sequence belongs to the glycosyltransferase 28 family. MurG subfamily.

Its subcellular location is the cell inner membrane. The catalysed reaction is di-trans,octa-cis-undecaprenyl diphospho-N-acetyl-alpha-D-muramoyl-L-alanyl-D-glutamyl-meso-2,6-diaminopimeloyl-D-alanyl-D-alanine + UDP-N-acetyl-alpha-D-glucosamine = di-trans,octa-cis-undecaprenyl diphospho-[N-acetyl-alpha-D-glucosaminyl-(1-&gt;4)]-N-acetyl-alpha-D-muramoyl-L-alanyl-D-glutamyl-meso-2,6-diaminopimeloyl-D-alanyl-D-alanine + UDP + H(+). Its pathway is cell wall biogenesis; peptidoglycan biosynthesis. Functionally, cell wall formation. Catalyzes the transfer of a GlcNAc subunit on undecaprenyl-pyrophosphoryl-MurNAc-pentapeptide (lipid intermediate I) to form undecaprenyl-pyrophosphoryl-MurNAc-(pentapeptide)GlcNAc (lipid intermediate II). The polypeptide is UDP-N-acetylglucosamine--N-acetylmuramyl-(pentapeptide) pyrophosphoryl-undecaprenol N-acetylglucosamine transferase (Caulobacter vibrioides (strain ATCC 19089 / CIP 103742 / CB 15) (Caulobacter crescentus)).